The chain runs to 136 residues: Protein NrdI (136 aa).

It belongs to the NrdI family.

Probably involved in ribonucleotide reductase function. The sequence is that of Protein NrdI from Klebsiella pneumoniae subsp. pneumoniae (strain ATCC 700721 / MGH 78578).